The following is a 332-amino-acid chain: L-lactate dehydrogenase A chain (332 aa).

A2 carries the post-translational modification N-acetylalanine. The residue at position 5 (K5) is an N6-acetyllysine; alternate. N6-succinyllysine; alternate is present on K5. Y10 carries the post-translational modification Phosphotyrosine. K14 is modified (N6-acetyllysine). T18 is subject to Phosphothreonine. Residue 29–57 (GAVGMACAISILMKDLADELALVDVIEDK) participates in NAD(+) binding. K57 is modified (N6-acetyllysine; alternate). K57 participates in a covalent cross-link: Glycyl lysine isopeptide (Lys-Gly) (interchain with G-Cter in SUMO2); alternate. N6-acetyllysine is present on K81. R99 serves as a coordination point for NAD(+). Position 106 (R106) interacts with substrate. K118 is modified (N6-acetyllysine; alternate). K118 carries the post-translational modification N6-succinyllysine; alternate. K126 is subject to N6-acetyllysine. NAD(+) is bound at residue N138. Substrate contacts are provided by N138 and R169. H193 serves as the catalytic Proton acceptor. An N6-acetyllysine mark is found at K224 and K232. At Y239 the chain carries Phosphotyrosine. K243 carries the N6-acetyllysine modification. T248 is a binding site for substrate. A Phosphothreonine modification is found at T309. At S310 the chain carries Phosphoserine. N6-acetyllysine; alternate is present on K318. K318 is modified (N6-succinyllysine; alternate). At T322 the chain carries Phosphothreonine.

This sequence belongs to the LDH/MDH superfamily. LDH family. Homotetramer. Interacts with PTEN upstream reading frame protein MP31. Interacts with folliculin FLCN; the interaction is direct and inhibits enzymatic activity. In terms of processing, ISGylated. Predominantly expressed in anaerobic tissues such as skeletal muscle and liver.

It localises to the cytoplasm. It carries out the reaction (S)-lactate + NAD(+) = pyruvate + NADH + H(+). The protein operates within fermentation; pyruvate fermentation to lactate; (S)-lactate from pyruvate: step 1/1. With respect to regulation, fermentation of pyruvate to lactate is inhibited when bound to folliculin FLCN, perhaps partly by FLCN preventing binding of cofactor NADH. Interconverts simultaneously and stereospecifically pyruvate and lactate with concomitant interconversion of NADH and NAD(+). The protein is L-lactate dehydrogenase A chain of Homo sapiens (Human).